Here is a 497-residue protein sequence, read N- to C-terminus: ATP synthase subunit alpha, chloroplastic (497 aa).

Glycine 170–threonine 177 contributes to the ATP binding site.

It belongs to the ATPase alpha/beta chains family. F-type ATPases have 2 components, CF(1) - the catalytic core - and CF(0) - the membrane proton channel. CF(1) has five subunits: alpha(3), beta(3), gamma(1), delta(1), epsilon(1). CF(0) has four main subunits: a, b, b' and c.

The protein resides in the plastid. It is found in the chloroplast thylakoid membrane. The catalysed reaction is ATP + H2O + 4 H(+)(in) = ADP + phosphate + 5 H(+)(out). Its function is as follows. Produces ATP from ADP in the presence of a proton gradient across the membrane. The alpha chain is a regulatory subunit. The protein is ATP synthase subunit alpha, chloroplastic of Bigelowiella natans (Pedinomonas minutissima).